We begin with the raw amino-acid sequence, 200 residues long: Probable GTP-binding protein EngB (200 aa).

Residues 24–199 (EGAEVAFAGR…RGVIGGWLGL (176 aa)) enclose the EngB-type G domain. GTP contacts are provided by residues 32–39 (GRSNAGKS), 59–63 (GRTQQ), 77–80 (DLPG), 144–147 (TKAD), and 178–180 (FSG). Ser-39 and Thr-61 together coordinate Mg(2+).

It belongs to the TRAFAC class TrmE-Era-EngA-EngB-Septin-like GTPase superfamily. EngB GTPase family. Mg(2+) is required as a cofactor.

Functionally, necessary for normal cell division and for the maintenance of normal septation. This chain is Probable GTP-binding protein EngB, found in Stenotrophomonas maltophilia (strain K279a).